A 539-amino-acid chain; its full sequence is Phenylalanine--tRNA ligase beta subunit (539 aa).

One can recognise a B5 domain in the interval 271–347; that stretch reads LSPARWTVTT…KSYGYENLKA (77 aa). Mg(2+)-binding residues include Asp-325, Asp-331, Glu-334, and Asp-335.

The protein belongs to the phenylalanyl-tRNA synthetase beta subunit family. Type 2 subfamily. As to quaternary structure, tetramer of two alpha and two beta subunits. It depends on Mg(2+) as a cofactor.

It localises to the cytoplasm. The catalysed reaction is tRNA(Phe) + L-phenylalanine + ATP = L-phenylalanyl-tRNA(Phe) + AMP + diphosphate + H(+). This Methanothrix thermoacetophila (strain DSM 6194 / JCM 14653 / NBRC 101360 / PT) (Methanosaeta thermophila) protein is Phenylalanine--tRNA ligase beta subunit.